The following is a 90-amino-acid chain: Acylphosphatase (90 aa).

An Acylphosphatase-like domain is found at 3–90 (QKLFIVTGHV…EQFEHFEIRR (88 aa)). Catalysis depends on residues Arg-18 and Asn-36.

This sequence belongs to the acylphosphatase family.

The enzyme catalyses an acyl phosphate + H2O = a carboxylate + phosphate + H(+). This chain is Acylphosphatase (acyP), found in Actinobacillus pleuropneumoniae serotype 5b (strain L20).